A 29-amino-acid chain; its full sequence is MDIVSLGWAFLMVVFSFSLSLVVWGRNGL.

A helical membrane pass occupies residues 3–23 (IVSLGWAFLMVVFSFSLSLVV).

It belongs to the PetN family. As to quaternary structure, the 4 large subunits of the cytochrome b6-f complex are cytochrome b6, subunit IV (17 kDa polypeptide, PetD), cytochrome f and the Rieske protein, while the 4 small subunits are PetG, PetL, PetM and PetN. The complex functions as a dimer.

The protein localises to the plastid. The protein resides in the chloroplast thylakoid membrane. In terms of biological role, component of the cytochrome b6-f complex, which mediates electron transfer between photosystem II (PSII) and photosystem I (PSI), cyclic electron flow around PSI, and state transitions. The polypeptide is Cytochrome b6-f complex subunit 8 (Chlorokybus atmophyticus (Soil alga)).